The chain runs to 465 residues: Light-independent protochlorophyllide reductase subunit N (465 aa).

[4Fe-4S] cluster-binding residues include Cys23, Cys48, and Cys108.

Belongs to the BchN/ChlN family. Protochlorophyllide reductase is composed of three subunits; ChlL, ChlN and ChlB. Forms a heterotetramer of two ChlB and two ChlN subunits. [4Fe-4S] cluster is required as a cofactor.

It catalyses the reaction chlorophyllide a + oxidized 2[4Fe-4S]-[ferredoxin] + 2 ADP + 2 phosphate = protochlorophyllide a + reduced 2[4Fe-4S]-[ferredoxin] + 2 ATP + 2 H2O. It functions in the pathway porphyrin-containing compound metabolism; chlorophyll biosynthesis (light-independent). Functionally, component of the dark-operative protochlorophyllide reductase (DPOR) that uses Mg-ATP and reduced ferredoxin to reduce ring D of protochlorophyllide (Pchlide) to form chlorophyllide a (Chlide). This reaction is light-independent. The NB-protein (ChlN-ChlB) is the catalytic component of the complex. The sequence is that of Light-independent protochlorophyllide reductase subunit N from Trichodesmium erythraeum (strain IMS101).